A 392-amino-acid polypeptide reads, in one-letter code: Chorismate synthase (392 aa).

The NADP(+) site is built by arginine 39 and arginine 45. Residues 131–133 (RSS), 255–256 (NA), glycine 300, 315–319 (KPIPT), and arginine 341 each bind FMN.

The protein belongs to the chorismate synthase family. In terms of assembly, homotetramer. The cofactor is FMNH2.

It catalyses the reaction 5-O-(1-carboxyvinyl)-3-phosphoshikimate = chorismate + phosphate. Its pathway is metabolic intermediate biosynthesis; chorismate biosynthesis; chorismate from D-erythrose 4-phosphate and phosphoenolpyruvate: step 7/7. Its function is as follows. Catalyzes the anti-1,4-elimination of the C-3 phosphate and the C-6 proR hydrogen from 5-enolpyruvylshikimate-3-phosphate (EPSP) to yield chorismate, which is the branch point compound that serves as the starting substrate for the three terminal pathways of aromatic amino acid biosynthesis. This reaction introduces a second double bond into the aromatic ring system. The sequence is that of Chorismate synthase from Leuconostoc mesenteroides subsp. mesenteroides (strain ATCC 8293 / DSM 20343 / BCRC 11652 / CCM 1803 / JCM 6124 / NCDO 523 / NBRC 100496 / NCIMB 8023 / NCTC 12954 / NRRL B-1118 / 37Y).